A 353-amino-acid polypeptide reads, in one-letter code: Inactive ubiquitin thioesterase OTULINL (353 aa).

The required for membrane binding stretch occupies residues 1–80; the sequence is MKATRSAPRE…KWWIGYLQRK (80 aa). An OTU domain is found at 125–353; sequence KCVRPVKRDN…NDHQYHIPVF (229 aa).

The protein belongs to the peptidase C65 family. Otulin subfamily. In terms of assembly, does not bind ubiquitin or ubiquitin-like proteins.

It localises to the cytoplasm. It is found in the endoplasmic reticulum membrane. The protein localises to the nucleus envelope. Lacks deubiquitinase activity. This is Inactive ubiquitin thioesterase OTULINL from Rattus norvegicus (Rat).